The sequence spans 163 residues: Sorting nexin-3 (163 aa).

Residues 39–162 (VEVRDPRTHF…VRFLQDEVFN (124 aa)) enclose the PX domain. A 1,2-diacyl-sn-glycero-3-phospho-(1D-myo-inositol-3-phosphate)-binding residues include R82, S84, K113, R119, and R128.

This sequence belongs to the sorting nexin family.

The protein localises to the cytoplasm. It localises to the golgi apparatus membrane. The protein resides in the prevacuolar compartment membrane. Its function is as follows. Required for retention of late Golgi membrane proteins. Component of the retrieval machinery that functions by direct interaction with the cytosolic tails of certain TGN membrane proteins during the sorting/budding process at the prevacuolar compartment. Binds phosphatidylinositol 3-phosphate (PtdIns(P3)). The polypeptide is Sorting nexin-3 (SNX3) (Eremothecium gossypii (strain ATCC 10895 / CBS 109.51 / FGSC 9923 / NRRL Y-1056) (Yeast)).